A 99-amino-acid chain; its full sequence is Aspartyl/glutamyl-tRNA(Asn/Gln) amidotransferase subunit C (99 aa).

The protein belongs to the GatC family. Heterotrimer of A, B and C subunits.

The enzyme catalyses L-glutamyl-tRNA(Gln) + L-glutamine + ATP + H2O = L-glutaminyl-tRNA(Gln) + L-glutamate + ADP + phosphate + H(+). It carries out the reaction L-aspartyl-tRNA(Asn) + L-glutamine + ATP + H2O = L-asparaginyl-tRNA(Asn) + L-glutamate + ADP + phosphate + 2 H(+). Its function is as follows. Allows the formation of correctly charged Asn-tRNA(Asn) or Gln-tRNA(Gln) through the transamidation of misacylated Asp-tRNA(Asn) or Glu-tRNA(Gln) in organisms which lack either or both of asparaginyl-tRNA or glutaminyl-tRNA synthetases. The reaction takes place in the presence of glutamine and ATP through an activated phospho-Asp-tRNA(Asn) or phospho-Glu-tRNA(Gln). The protein is Aspartyl/glutamyl-tRNA(Asn/Gln) amidotransferase subunit C of Thermobifida fusca (strain YX).